We begin with the raw amino-acid sequence, 782 residues long: uncharacterized protein (782 aa).

Residues 10-30 (LLTITIGAVAVSSILLGGIFY) traverse the membrane as a helical segment. The span at 57 to 76 (LDYQKARPSIKDSNLKEIPK) shows a compositional bias: basic and acidic residues. The segment at 57-171 (LDYQKARPSI…PQPQQVPNNS (115 aa)) is disordered. The segment covering 77–97 (PKPQPKPKPQPTPFPDPIPTP) has biased composition (pro residues). Residues 98–124 (PKKEELKKPDIKPEEPKKPEIKPEPKP) show a composition bias toward basic and acidic residues. Pro residues predominate over residues 125-135 (EPIPQPAPPIE).

The protein to U.parvum UU046.

The protein resides in the membrane. This is an uncharacterized protein from Ureaplasma parvum serovar 3 (strain ATCC 700970).